Here is a 343-residue protein sequence, read N- to C-terminus: MLDIKRKQDHIEINLTKNVESGLSSGFESVQFVHNALPEINYSSIDTTTTFLNKILQAPILISSMTGGTPRARDINCRLAAAAQKAGIAMGLGSMRTLLTEPSTLDTFTVRNNAPDIVLLANIGAVQLNYGVTPKQCQYLVDSVKADALILHLNVLQELTQPEGDKNWENLLPKIKEVVNYLSVPVIIKEVGFGLSKKTAKQFIDIGVKILDVAGSGGTSWSQVEAYRATNSLQNRIASSFINWGIPTLDSLKMVREASKDISVIASGGLKSGIDGAKAIRMGADIFGLAGPFLKAADVSENLVSEEIQLIIEQLKITMMCTGSHTINNLKKAELRMNHIPLY.

Residue 6–7 (RK) participates in substrate binding. Residues S63, 64-66 (SMT), S94, and N122 each bind FMN. 94–96 (SMR) lines the substrate pocket. Q157 serves as a coordination point for substrate. E158 serves as a coordination point for Mg(2+). FMN-binding positions include K189, T219, 269–271 (GLK), and 290–291 (AG).

Belongs to the IPP isomerase type 2 family. In terms of assembly, homooctamer. Dimer of tetramers. The cofactor is FMN. NADPH is required as a cofactor. It depends on Mg(2+) as a cofactor.

The protein resides in the cytoplasm. It catalyses the reaction isopentenyl diphosphate = dimethylallyl diphosphate. Functionally, involved in the biosynthesis of isoprenoids. Catalyzes the 1,3-allylic rearrangement of the homoallylic substrate isopentenyl (IPP) to its allylic isomer, dimethylallyl diphosphate (DMAPP). The polypeptide is Isopentenyl-diphosphate delta-isomerase (Rickettsia bellii (strain OSU 85-389)).